A 553-amino-acid chain; its full sequence is Muellerian-inhibiting factor (553 aa).

The first 22 residues, 1–22, serve as a signal peptide directing secretion; the sequence is MQGPHLSLLLLLLATMGAVLQA. Residues 23-445 constitute a propeptide that is removed on maturation; that stretch reads DTVEELTNTR…GREGRGRAGR (423 aa). N-linked (GlcNAc...) asparagine glycosylation is found at asparagine 325 and asparagine 409. 3 disulfides stabilise this stretch: cysteine 455-cysteine 519, cysteine 481-cysteine 550, and cysteine 485-cysteine 552.

This sequence belongs to the TGF-beta family. As to quaternary structure, homodimer; disulfide-linked. In terms of processing, preproprotein is proteolytically processed to generate N- and C-terminal cleavage products that homodimerize and associate to form a biologically active non-covalent complex. Binding of the non-covalent complex to AMHR2 induces dissociation of the pro-region from the mature C-terminal dimer. The N-terminal portion of the protein, despite having no intrinsic activity, has the role of amplifying the activity of the C-terminus. As to expression, mainly expressed in granulosa cells from preantral and small antral follicles.

The protein localises to the secreted. Plays an important role in several reproductive functions. Induces Muellerian duct regression during male fetal sexual differentiation and plays a role in Leydig cell differentiation and function. In female acts as a negative regulator of the primordial to primary follicle transition and decreases FSH sensitivity of growing follicles. AMH signals by binding to a specific type-II receptor, AMHR2, that heterodimerizes with type-I receptors (ACVR1 and BMPR1A), and recruiting SMAD proteins that are translocated to the nucleus to regulate target gene expression. This Rattus norvegicus (Rat) protein is Muellerian-inhibiting factor (Amh).